Consider the following 913-residue polypeptide: Sterol uptake control protein 2 (913 aa).

A DNA-binding region (zn(2)-C6 fungal-type) is located at residues 50–80 (GCDNCKRRRVKCDEGKPACRKCTNMKLECQY). Disordered stretches follow at residues 103 to 173 (GSVE…SMGL) and 216 to 258 (GNMG…LAGS). Position 122 is a phosphothreonine (Thr122). The segment covering 150-164 (SESEEKSSAPIEDKN) has biased composition (basic and acidic residues). The span at 222-241 (QLQQQQQVQQQSQPQTQAQQ) shows a compositional bias: low complexity. The stretch at 303 to 346 (QQHQQVQLQQYQQLRQEQHQQVQQQQQEQLQQYQQHFLQQQQQV) forms a coiled coil. Disordered stretches follow at residues 347–385 (LLQQ…TLNS) and 453–489 (MQEH…GSAS). Residues 374 to 385 (LQSQTSETTLNS) show a composition bias toward polar residues. Positions 440-472 (ATKASNAEEALANMQEHHERAAASVKENDGQLS) form a coiled coil. The span at 454 to 468 (QEHHERAAASVKEND) shows a compositional bias: basic and acidic residues. Polar residues predominate over residues 469–487 (GQLSDTKSPAPSNNAQGGS). Position 519 is a phosphoserine (Ser519). Residues 552 to 562 (EPTISLQTSQT) are compositionally biased toward polar residues. The disordered stretch occupies residues 552-571 (EPTISLQTSQTENEDDASRQ).

The protein resides in the nucleus. Transcription factor that is involved in activation of anaerobic genes such as DAN/TIR cell wall mannoprotein genes and YML083c. Appears to bind to anaerobic response elements (AR1) with the consensus sequence 5'-TCGTTYAG-3' present in the promoter regions of DAN/TIR genes. Involved in sterol uptake and regulation of the sterol biosynthesis. Binds to sterol regulatory elements (SRE) with the consensus sequence 5'-TCGTATA-3' present in ERG2 and ERG3 promoters. May be involved in down-regulation of CWP2 during anaerobic adaptation. In Saccharomyces cerevisiae (strain ATCC 204508 / S288c) (Baker's yeast), this protein is Sterol uptake control protein 2 (UPC2).